Consider the following 160-residue polypeptide: 6,7-dimethyl-8-ribityllumazine synthase (160 aa).

5-amino-6-(D-ribitylamino)uracil-binding positions include Trp-27, 59–61 (AIE), and 81–83 (VVI). 86-87 (ET) is a binding site for (2S)-2-hydroxy-3-oxobutyl phosphate. The active-site Proton donor is the His-89. Residue Asn-114 coordinates 5-amino-6-(D-ribitylamino)uracil. Residue Arg-128 coordinates (2S)-2-hydroxy-3-oxobutyl phosphate.

This sequence belongs to the DMRL synthase family. Homopentamer.

It catalyses the reaction (2S)-2-hydroxy-3-oxobutyl phosphate + 5-amino-6-(D-ribitylamino)uracil = 6,7-dimethyl-8-(1-D-ribityl)lumazine + phosphate + 2 H2O + H(+). The protein operates within cofactor biosynthesis; riboflavin biosynthesis; riboflavin from 2-hydroxy-3-oxobutyl phosphate and 5-amino-6-(D-ribitylamino)uracil: step 1/2. Catalyzes the formation of 6,7-dimethyl-8-ribityllumazine by condensation of 5-amino-6-(D-ribitylamino)uracil with 3,4-dihydroxy-2-butanone 4-phosphate. This is the penultimate step in the biosynthesis of riboflavin. The polypeptide is 6,7-dimethyl-8-ribityllumazine synthase (Mycobacterium ulcerans (strain Agy99)).